A 174-amino-acid chain; its full sequence is MGKITLYEDKAFQGRSYESTTDCPNLQTYLSRCNSIRVESGCWMLYERPNYQGQQYLLRRGEYPDYQQWMGLSDSIRSCCLIPQTGSHRLRLYEREDHKGLMMELSEDCPSIQDRFHLSEIRSLHVLEGCWVLYELPNYRGRQYLLRPQEYRRCQDWGAMDAKAGSLRRVVDLY.

Beta/gamma crystallin 'Greek key' domains lie at 2–40 (GKIT…RVES) and 41–83 (GCWM…CLIP). Cys23 is modified (S-methylcysteine). The connecting peptide stretch occupies residues 84-87 (QTGS). Beta/gamma crystallin 'Greek key' domains follow at residues 88-128 (HRLR…HVLE) and 129-171 (GCWV…RRVV).

The protein belongs to the beta/gamma-crystallin family. Monomer.

Its function is as follows. Crystallins are the dominant structural components of the vertebrate eye lens. The chain is Gamma-crystallin C (CRYGC) from Macaca mulatta (Rhesus macaque).